Reading from the N-terminus, the 261-residue chain is Small ribosomal subunit protein uS2 (261 aa).

Serine 2 is subject to N-acetylserine. The disordered stretch occupies residues 215-261 (AEEAKTTEDVEEAAPVDADEWTGETEEVDWAESGATPAVEDAAASNW). The segment covering 223 to 244 (DVEEAAPVDADEWTGETEEVDW) has biased composition (acidic residues).

This sequence belongs to the universal ribosomal protein uS2 family. As to quaternary structure, component of the small ribosomal subunit. Mature ribosomes consist of a small (40S) and a large (60S) subunit. The 40S subunit contains about 33 different proteins and 1 molecule of RNA (18S). The 60S subunit contains about 49 different proteins and 3 molecules of RNA (25S, 5.8S and 5S). Interacts with RPS21.

The protein localises to the cytoplasm. Functionally, required for the assembly and/or stability of the 40S ribosomal subunit. Required for the processing of the 20S rRNA-precursor to mature 18S rRNA in a late step of the maturation of 40S ribosomal subunits. The sequence is that of Small ribosomal subunit protein uS2 from Scheffersomyces stipitis (strain ATCC 58785 / CBS 6054 / NBRC 10063 / NRRL Y-11545) (Yeast).